The chain runs to 369 residues: Transcription factor GTE6 (369 aa).

One can recognise a Bromo domain in the interval 89 to 198; the sequence is KRMQDLMRQF…EKFEEKWAHF (110 aa). Residues 201–263 are a coiled coil; it reads KVQEEEKIRE…VERCRKITIE (63 aa). The region spanning 250 to 331 is the NET domain; that stretch reads MRKVVERCRK…DALDNAMKKK (82 aa). Residues 329-348 show a composition bias toward basic and acidic residues; sequence KKKKEEETKTRELSGAQKKE. Residues 329–369 form a disordered region; sequence KKKKEEETKTRELSGAQKKEVSKKRNATTKLAERKTKRSRI. A Bipartite nuclear localization signal motif is present at residues 351–368; it reads KKRNATTKLAERKTKRSR.

In terms of tissue distribution, abundantly expressed in flowers. Weakly expressed in roots, leaves and siliques; and undetectable in 5-day-old seedlings. In the basal rosette leaves of 21-day-old plants, it is more abundant in leaves 6 and 7, which possess narrow elliptical laminae, than in leaves 1-4, which have round laminae, suggesting a possible correlation between its expression and the formation of elliptical leaf laminae in mature leaves.

The protein localises to the nucleus. In terms of biological role, regulates differences in leaf patterning between juvenile and mature leaves by controlling differences in the development of primordia produced during juvenile and mature phases. Acts by activating transcription of the myb-domain protein AS1, a gene involved in leaf-axis specification. Associates with the promoter and the start of the transcribed region of AS1 and up-regulates expression of AS1 through acetylation of histones H3 and H4. This Arabidopsis thaliana (Mouse-ear cress) protein is Transcription factor GTE6 (GTE6).